Reading from the N-terminus, the 225-residue chain is DNA-binding response regulator MtrA (225 aa).

In terms of domain architecture, Response regulatory spans 4–117 (RILVVDDDAS…ELVARVRARL (114 aa)). A 4-aspartylphosphate modification is found at D53. Residues 125–224 (AEMLSIADVD…VRGVGYKAGP (100 aa)) constitute a DNA-binding region (ompR/PhoB-type).

Post-translationally, phosphorylated by MtrB.

Its function is as follows. Member of the two-component regulatory system MtrA/MtrB. The polypeptide is DNA-binding response regulator MtrA (mtrA) (Mycobacterium leprae (strain TN)).